Consider the following 359-residue polypeptide: Membrane-bound lytic murein transglycosylase C (359 aa).

The signal sequence occupies residues 1-16 (MKKYLALALIAPLLIS). Cysteine 17 carries the N-palmitoyl cysteine lipid modification. The S-diacylglycerol cysteine moiety is linked to residue cysteine 17.

This sequence belongs to the transglycosylase Slt family.

Its subcellular location is the cell outer membrane. The catalysed reaction is Exolytic cleavage of the (1-&gt;4)-beta-glycosidic linkage between N-acetylmuramic acid (MurNAc) and N-acetylglucosamine (GlcNAc) residues in peptidoglycan, from either the reducing or the non-reducing ends of the peptidoglycan chains, with concomitant formation of a 1,6-anhydrobond in the MurNAc residue.. In terms of biological role, murein-degrading enzyme. May play a role in recycling of muropeptides during cell elongation and/or cell division. This chain is Membrane-bound lytic murein transglycosylase C, found in Shigella dysenteriae serotype 1 (strain Sd197).